The sequence spans 103 residues: Small ribosomal subunit protein uS10 (103 aa).

Belongs to the universal ribosomal protein uS10 family. As to quaternary structure, part of the 30S ribosomal subunit.

Involved in the binding of tRNA to the ribosomes. This Azoarcus sp. (strain BH72) protein is Small ribosomal subunit protein uS10.